The following is a 189-amino-acid chain: Putative manganese efflux pump MntP (189 aa).

6 helical membrane-spanning segments follow: residues 6-26, 39-59, 71-91, 106-126, 131-151, and 169-189; these read IFGIAVALAMDAFAVSIAAGV, LAWHFGLFQALMPIVGWYAGL, WIAFFLLAFVSFNMIRESFDA, LVLLSIATSIDALAVGLSLSV, VWMPATVIGITAAVFTVGGLM, and VGAGVLLFIGLRILYAHGVFY.

It belongs to the MntP (TC 9.B.29) family.

It is found in the cell inner membrane. Functionally, probably functions as a manganese efflux pump. The sequence is that of Putative manganese efflux pump MntP from Desulfosudis oleivorans (strain DSM 6200 / JCM 39069 / Hxd3) (Desulfococcus oleovorans).